Reading from the N-terminus, the 484-residue chain is Zinc metalloproteinase homolog-disintegrin albolatin (484 aa).

The signal sequence occupies residues 1–20 (MIQVLLVTICLAVFPYQGSS). Positions 21-191 (IILESGNVND…KTSQLNLPLL (171 aa)) are excised as a propeptide. Residues N80, N251, and N301 are each glycosylated (N-linked (GlcNAc...) asparagine). In terms of domain architecture, Peptidase M12B spans 194–392 (RCIELVMVAD…WTSYCLYNEP (199 aa)). 10 disulfide bridges follow: C305/C387, C345/C369, C347/C352, C403/C422, C414/C432, C416/C427, C426/C449, C440/C446, C445/C470, and C458/C477. Residues 400-484 (PPVCGNYYLE…GDCPWIGYYG (85 aa)) form the Disintegrin domain. Positions 462–464 (KGD) match the Cell attachment site; atypical (KGD) motif.

It belongs to the venom metalloproteinase (M12B) family. P-II subfamily. P-IIb sub-subfamily. Homodimer; disulfide-linked (disintegrin). As to expression, expressed by the venom gland.

The protein resides in the secreted. Functionally, the function of this complete protein has not been studied, but it may be similar to the function of the disintegrin domain. A recombinant protein of this domain (409-484) inhibits collagen-induced human platelet aggregation, without having effect on ADP-induced aggregation. It may act either by blocking the binding of fibrinogen to the platelet receptor GPIIb/GPIIIa (ITGA2B/ITGB3) or by blocking the binding of collagen to the integrin alpha-2/beta-1 complex (ITGA2/ITGB1). This Trimeresurus albolabris (White-lipped pit viper) protein is Zinc metalloproteinase homolog-disintegrin albolatin.